A 411-amino-acid chain; its full sequence is ATP phosphoribosyltransferase 1, chloroplastic (411 aa).

The span at 1 to 12 (MSLLLPTNLQQY) shows a compositional bias: polar residues. The tract at residues 1-27 (MSLLLPTNLQQYPSSSSFPSSTPILSP) is disordered. The N-terminal 49 residues, 1 to 49 (MSLLLPTNLQQYPSSSSFPSSTPILSPPPSTAFSVIVPRRRCLRLVTSC), are a transit peptide targeting the chloroplast. A compositionally biased stretch (low complexity) spans 13–24 (PSSSSFPSSTPI). At valine 50 the chain carries N-acetylvaline.

The protein belongs to the ATP phosphoribosyltransferase family. Long subfamily. Mg(2+) is required as a cofactor. As to expression, expressed in leaves and at lower levels in roots (at protein level).

The protein localises to the plastid. The protein resides in the chloroplast. It catalyses the reaction 1-(5-phospho-beta-D-ribosyl)-ATP + diphosphate = 5-phospho-alpha-D-ribose 1-diphosphate + ATP. It participates in amino-acid biosynthesis; L-histidine biosynthesis; L-histidine from 5-phospho-alpha-D-ribose 1-diphosphate: step 1/9. With respect to regulation, feedback inhibited by L-histidine. In terms of biological role, catalyzes the condensation of ATP and 5-phosphoribose 1-diphosphate to form N'-(5'-phosphoribosyl)-ATP (PR-ATP). This Arabidopsis thaliana (Mouse-ear cress) protein is ATP phosphoribosyltransferase 1, chloroplastic (HISN1A).